Consider the following 586-residue polypeptide: Terminase, large subunit (586 aa).

Positions 1–229 (MSTQSNRNAL…TIIWPALYPR (229 aa)) are ATPase activity. The Walker A motif motif lies at 58-65 (AFRGIGKS). The Walker B motif signature appears at 156–161 (IIIADD). Residues 344-429 (HSYHSCSQNT…ESNFGDGMFG (86 aa)) are nuclease activity. Positions 364, 420, and 518 each coordinate Mg(2+). An involved in prohead binding region spans residues 571-586 (LYWEDDDVNGDRFINW).

The protein belongs to the Teseptimavirus large terminase family. In terms of assembly, homopentamer. Interacts with the terminase small subunit; the active complex is probably heterooligomeric. Interacts with the portal protein. The cofactor is Mg(2+).

In terms of biological role, the terminase large subunit acts as an ATP driven molecular motor necessary for viral DNA translocation into empty capsids and as an endonuclease that cuts the viral genome at a unique and precise dsDNA sequence to initiate and to end a packaging reaction. The terminase lies at a unique vertex of the procapsid and is composed of two subunits, a small terminase subunit involved in viral DNA recognition (packaging sequence), and a large terminase subunit possessing endonucleolytic and ATPase activities. Both terminase subunits heterooligomerize and are docked on the portal protein to form the packaging machine. The terminase large subunit exhibits endonuclease activity and cleaves the viral genome concatemer. Once the DNA is packaged, the terminase detaches from the connector and gets replaced by the tail to finish maturation of the virion. This Escherichia coli (Bacteriophage T3) protein is Terminase, large subunit (19).